We begin with the raw amino-acid sequence, 303 residues long: tRNA pseudouridine synthase-like 1 (303 aa).

The active-site Nucleophile is the Asp-66. Ser-84 bears the Phosphoserine mark. Tyr-130 is a substrate binding site.

The protein belongs to the tRNA pseudouridine synthase TruA family.

It catalyses the reaction a uridine in tRNA = a pseudouridine in tRNA. This is tRNA pseudouridine synthase-like 1 (PUSL1) from Homo sapiens (Human).